Reading from the N-terminus, the 1538-residue chain is Phenolphthiocerol/phthiocerol polyketide synthase subunit B (1538 aa).

The region spanning 33 to 455 (AEPVAVVGIG…GTNAHVIIEQ (423 aa)) is the Ketosynthase family 3 (KS3) domain. Active-site for beta-ketoacyl synthase activity residues include Cys-205, His-340, and His-377. Residues 553-882 (DGSPGPGTVF…TNLYTADIAH (330 aa)) form an acyltransferase region. Residue Ser-649 is the For malonyltransferase activity of the active site. An NADP(+)-binding site is contributed by 1153-1196 (SQLVIGATGNIGPHLIRQLARMGAKTIVAMARKPGALDELTQCL). The beta-ketoacyl reductase stretch occupies residues 1153-1328 (SQLVIGATGN…TVVDWGLWKS (176 aa)). The Carrier domain occupies 1423 to 1498 (DMLFDHVGAL…SLTDYLATVL (76 aa)). Ser-1458 is modified (O-(pantetheine 4'-phosphoryl)serine).

NADP(+) serves as cofactor. Requires pantetheine 4'-phosphate as cofactor.

It catalyses the reaction icosanoyl-[(phenol)carboxyphthiodiolenone synthase] + 2 (S)-methylmalonyl-CoA + 3 malonyl-CoA + 5 NADPH + 10 H(+) = C32-carboxyphthiodiolenone-[(phenol)carboxyphthiodiolenone synthase] + 5 CO2 + 5 NADP(+) + 5 CoA + 2 H2O. It carries out the reaction docosanoyl-[(phenol)carboxyphthiodiolenone synthase] + 2 (S)-methylmalonyl-CoA + 3 malonyl-CoA + 5 NADPH + 10 H(+) = C34-carboxyphthiodiolenone-[(phenol)carboxyphthiodiolenone synthase] + 5 CO2 + 5 NADP(+) + 5 CoA + 2 H2O. The catalysed reaction is 17-(4-hydroxyphenyl)heptadecanoyl-[(phenol)carboxyphthiodiolenone synthase] + 2 (S)-methylmalonyl-CoA + 3 malonyl-CoA + 5 NADPH + 10 H(+) = C35-(phenol)carboxyphthiodiolenone-[(phenol)carboxyphthiodiolenone synthase] + 5 CO2 + 5 NADP(+) + 5 CoA + 2 H2O. The enzyme catalyses 19-(4-hydroxyphenyl)nonadecanoyl-[(phenol)carboxyphthiodiolenone synthase] + 2 (S)-methylmalonyl-CoA + 3 malonyl-CoA + 5 NADPH + 10 H(+) = C37-(phenol)carboxyphthiodiolenone-[(phenol)carboxyphthiodiolenone synthase] + 5 CO2 + 5 NADP(+) + 5 CoA + 2 H2O. It participates in lipid metabolism; fatty acid biosynthesis. In terms of biological role, part of the PpsABCDE complex involved in the biosynthesis of the lipid core common to phthiocerols and phenolphthiocerols by successive additions of malonyl-CoA or methylmalonyl-CoA extender units. PpsA can accept as substrate the activated forms of either icosanoyl (C20), docosanoyl (C22) or lignoceroyl (C24) groups from FadD26, or a (4-hydroxyphenyl)-C17 or (4-hydroxyphenyl)-C19 fatty acyl from FadD29. PpsA initiates the biosynthesis and extends its substrate using a malonyl-CoA extender unit. The PpsB and PpsC proteins add the second and third malonyl-CoA extender units. PpsD adds an (R)-methylmalonyl unit and PpsE adds a second (R)-methylmalonyl unit. The incorporation of the methylmalonyl units results in formation of two branched methyl groups in the elongated product. The chain is Phenolphthiocerol/phthiocerol polyketide synthase subunit B (ppsB) from Mycobacterium bovis (strain ATCC BAA-935 / AF2122/97).